Here is a 34-residue protein sequence, read N- to C-terminus: uncharacterized protein (34 aa).

Residues 10–30 (LIITSSFFAIAVVLVLSVLLI) form a helical membrane-spanning segment.

It is found in the membrane. This is an uncharacterized protein from Escherichia coli O157:H7.